The chain runs to 140 residues: uncharacterized protein (140 aa).

Residue 18–25 participates in ATP binding; sequence GTNGSGKS.

This is an uncharacterized protein from Haemophilus influenzae (strain ATCC 51907 / DSM 11121 / KW20 / Rd).